Here is a 1002-residue protein sequence, read N- to C-terminus: MKRSRLVPQHIFSIISKRYLAKHAYQKTLNLPKTKFPNRSNLEITLRELIPKSSQLVYKEQLRDFFEEFSKLNTTDEKLEFIKEKLFILHDGPPYANGELHLGHALNKILKDIINRYQLSQGKYIFYKPGWDCHGLPIEIKALKDLSAQQIESISPLKIRSMALKHAQKAIKRQRETFQHFAILTDWETPYLTMDKDYEINQLNIFKEMYERGLIKRQNKPVYWGTETRTALAEGELEYNENHKSIAAYVKFPLEKKSQMDLCKKLGITNNLPIYCLIWTSTPWTLLSNRAICFNQDFSYSLLRLNSELILVETGSIDKLGLTTNSFETIKQFQGTHLNGLYYQNLLVDDKVGRPLLHGAHVTSGTGTGLVHTAPGHGQDDYLIGIQNGLEIYSPVDHQGRYQLNELPQSVRSIVRDEGDLTKGRQVLDAETAKIILCKLSDLNLLYKSHEYTHSYPYDWRSKKPVIIRATPQWFADLHDVKNLALESISRVKFCPKRGYSRLSSFMKSRNEWCISRQRSWGIPILSFYKKSEPDSVLMNSEILAHAIEKIKQKGINAWFNDKDNDMKEWLPEKYHDVAHEYCRSQDTMDVWFDSGSSWSVIKDFYEKSLKLSKLPSPLYQVCLEGSDQHRGWFQSSLLTKVASSNVPVAPYEEVITHGFTLDENGLKMSKSVGNTISPEAIIRGDENLGLPALGVDGLRYLIAQSNFTTDIVAGPTVMKHVGEALKKVRLTFRYLLSNLQKSQDFNLLPIEQLRRVDQYTLYKINELLETTREHYQKYNFSKVLITLQYHLNNELSAFYFDISKDILYSNQISSLARRQVQTTLVHILNAYRAILAPILPVMVQEVWKYIPEGWLQGQEHIDINPMRGKWPFLDSNTEIVTSFENFELKILKQFQEEFKRLSLEEGVTKTTHSHVTIFTKHHLPFSSDELCDILQSSAVDILQMDDNNNSLPTIELGSGINVQILVERSKRHNCPRCWKANSAEEDKLCDRCKEAVDHLMS.

Positions 94-104 (PYANGELHLGH) match the 'HIGH' region motif. The 'KMSKS' region signature appears at 668 to 672 (KMSKS). Lysine 671 provides a ligand contact to ATP.

Belongs to the class-I aminoacyl-tRNA synthetase family.

Its subcellular location is the mitochondrion matrix. The enzyme catalyses tRNA(Ile) + L-isoleucine + ATP = L-isoleucyl-tRNA(Ile) + AMP + diphosphate. The sequence is that of Isoleucine--tRNA ligase, mitochondrial (ISM1) from Saccharomyces cerevisiae (strain ATCC 204508 / S288c) (Baker's yeast).